The primary structure comprises 510 residues: P-(S)-hydroxymandelonitrile lyase (510 aa).

An N-terminal signal peptide occupies residues 1–34; the sequence is MAVFISSSGSPGRATATTTTTTTLLLAVLAAAAA. Position 116–118 (116–118) interacts with substrate; sequence NGG. Intrachain disulfides connect cysteine 121–cysteine 377, cysteine 277–cysteine 289, and cysteine 313–cysteine 344. N-linked (GlcNAc...) asparagine glycosylation occurs at asparagine 172. 212-213 is a substrate binding site; the sequence is ES. Serine 213 is a catalytic residue. The N-linked (GlcNAc...) asparagine glycan is linked to asparagine 365. Active-site residues include aspartate 414 and histidine 469. Residue 465 to 469 coordinates substrate; that stretch reads SGAGH.

The protein belongs to the peptidase S10 family. As to quaternary structure, heterotetramer of two A and two B chains. The A and B chains are linked by a disulfide bond. Post-translationally, the N-terminus of chain A is blocked. As to expression, primary leaves of seedlings.

It catalyses the reaction (S)-4-hydroxymandelonitrile = 4-hydroxybenzaldehyde + hydrogen cyanide. Its function is as follows. Involved in cyanogenesis, the release of HCN from injured tissues. Is involved in the catabolism of the cyanogenic glycoside dhurrin. This chain is P-(S)-hydroxymandelonitrile lyase, found in Sorghum bicolor (Sorghum).